Reading from the N-terminus, the 87-residue chain is Small ribosomal subunit protein bS20 (87 aa).

It belongs to the bacterial ribosomal protein bS20 family.

In terms of biological role, binds directly to 16S ribosomal RNA. This Geobacter sulfurreducens (strain ATCC 51573 / DSM 12127 / PCA) protein is Small ribosomal subunit protein bS20.